A 294-amino-acid chain; its full sequence is Oligopeptide transport system permease protein OppC (294 aa).

The next 6 helical transmembrane spans lie at 27–47 (MIST…SMFL), 94–114 (IAFA…VITG), 127–147 (FTDF…VTII), 151–171 (NSWS…TRLI), 202–224 (IWPN…NIGL), and 260–280 (WTWV…IFIG). Residues 88-280 (ARNSFNIAFA…IVVLAIIFIG (193 aa)) enclose the ABC transmembrane type-1 domain.

The protein belongs to the binding-protein-dependent transport system permease family. OppBC subfamily. The complex is composed of two ATP-binding proteins (OppD and OppF), two transmembrane proteins (OppB and OppC) and a solute-binding protein (OppA).

The protein resides in the cell membrane. Part of the ABC transporter complex OppABCDF involved in the uptake of oligopeptides. Probably responsible for the translocation of the substrate across the membrane. In Lactococcus lactis subsp. cremoris (strain SK11), this protein is Oligopeptide transport system permease protein OppC.